The sequence spans 443 residues: ATP-dependent protease ATPase subunit HslU (443 aa).

ATP-binding positions include Ile18 and 60 to 65 (GVGKTE). Positions 142-162 (LGFEASPSEESNATRQKFRKK) are disordered. 3 residues coordinate ATP: Asp256, Glu321, and Arg393.

The protein belongs to the ClpX chaperone family. HslU subfamily. A double ring-shaped homohexamer of HslV is capped on each side by a ring-shaped HslU homohexamer. The assembly of the HslU/HslV complex is dependent on binding of ATP.

The protein localises to the cytoplasm. ATPase subunit of a proteasome-like degradation complex; this subunit has chaperone activity. The binding of ATP and its subsequent hydrolysis by HslU are essential for unfolding of protein substrates subsequently hydrolyzed by HslV. HslU recognizes the N-terminal part of its protein substrates and unfolds these before they are guided to HslV for hydrolysis. In Nitrosomonas europaea (strain ATCC 19718 / CIP 103999 / KCTC 2705 / NBRC 14298), this protein is ATP-dependent protease ATPase subunit HslU.